The following is an 863-amino-acid chain: uncharacterized protein (863 aa).

The N-terminal stretch at 1–29 (MHQSGSVSLCRSAISVLVATALYSPIALA) is a signal peptide. Residues 595 to 863 (GVSYDTAMWS…NTQAGVVWTF (269 aa)) form the Autotransporter domain.

The protein localises to the cell outer membrane. This is an uncharacterized protein from Escherichia coli (strain K12).